The following is a 144-amino-acid chain: 3-dehydroquinate dehydratase (144 aa).

Catalysis depends on Y24, which acts as the Proton acceptor. Residues N76, H82, and D89 each coordinate substrate. The active-site Proton donor is H102. Residues 103–104 (LS) and R113 contribute to the substrate site.

The protein belongs to the type-II 3-dehydroquinase family. As to quaternary structure, homododecamer.

It catalyses the reaction 3-dehydroquinate = 3-dehydroshikimate + H2O. Its pathway is metabolic intermediate biosynthesis; chorismate biosynthesis; chorismate from D-erythrose 4-phosphate and phosphoenolpyruvate: step 3/7. Its function is as follows. Catalyzes a trans-dehydration via an enolate intermediate. This is 3-dehydroquinate dehydratase from Bordetella bronchiseptica (strain ATCC BAA-588 / NCTC 13252 / RB50) (Alcaligenes bronchisepticus).